The primary structure comprises 382 residues: Serine protease 23 (382 aa).

Residues 1 to 22 (MAGIPGLFILLVLLCVFMQVSP) form the signal peptide. The N-linked (GlcNAc...) asparagine glycan is linked to N92. Residues C159 and C175 are joined by a disulfide bond. H174 functions as the Charge relay system in the catalytic mechanism. N206 is a glycosylation site (N-linked (GlcNAc...) asparagine). Residues D239 and S315 each act as charge relay system in the active site.

Belongs to the peptidase S1 family.

It localises to the secreted. The polypeptide is Serine protease 23 (Prss23) (Mus musculus (Mouse)).